We begin with the raw amino-acid sequence, 296 residues long: MNKEQLEKMKNGKGFIAALDQSGGSTPKALKEYGVNEDQYSNEDEMFQLVHDMRTRVVTSPSFSPDKILGAILFEQTMDREVEGKYTADYLADKGVVPFLKVDKGLAEEQNGVQLMKPIDNLDSLLDRANERHIFGTKMRSNILELNEQGIKDVVEQQFEVAKQIIAKGLVPIIEPEVNINAKDKAEIEKVLKAELKKGLDSLNADQLVMLKLTIPTEANLYKDLAEHPNVVRIVVLSGGYSREKANELLKDNAELIASFSRALASDLRAGQSKEEFDKALGDAVESIYDASVNKN.

The active-site Proton acceptor is the Glu175. Lys212 (schiff-base intermediate with dihydroxyacetone-P) is an active-site residue.

Belongs to the class I fructose-bisphosphate aldolase family.

It catalyses the reaction beta-D-fructose 1,6-bisphosphate = D-glyceraldehyde 3-phosphate + dihydroxyacetone phosphate. The protein operates within carbohydrate degradation; glycolysis; D-glyceraldehyde 3-phosphate and glycerone phosphate from D-glucose: step 4/4. This chain is Fructose-bisphosphate aldolase class 1, found in Staphylococcus aureus (strain MRSA252).